Consider the following 601-residue polypeptide: DNA ligase (601 aa).

ATP is bound at residue aspartate 258. The N6-AMP-lysine intermediate role is filled by lysine 260. ATP-binding residues include arginine 265, arginine 280, glutamate 310, phenylalanine 350, arginine 427, and lysine 433.

The protein belongs to the ATP-dependent DNA ligase family. In terms of assembly, interacts with the PCNA heterotrimer, probably via subunit PCNA3. Requires a divalent metal cation as cofactor.

The enzyme catalyses ATP + (deoxyribonucleotide)n-3'-hydroxyl + 5'-phospho-(deoxyribonucleotide)m = (deoxyribonucleotide)n+m + AMP + diphosphate.. Ligase activity stimulated by PCNA heterotrimer. Functionally, DNA ligase that seals nicks in double-stranded DNA during DNA replication, DNA recombination and DNA repair. Interaction with PCNA enhances ligase activity. DNA polymerase I, DNA ligase and the flap endonuclease may be constitutively associated with the PCNA heterotrimer forming a scanning complex able to couple DNA synthesis and Okazaki fragment maturation. This Saccharolobus solfataricus (strain ATCC 35092 / DSM 1617 / JCM 11322 / P2) (Sulfolobus solfataricus) protein is DNA ligase.